A 184-amino-acid chain; its full sequence is Large ribosomal subunit protein uL18 (184 aa).

The protein belongs to the universal ribosomal protein uL18 family. In terms of assembly, part of the 50S ribosomal subunit. Contacts the 5S and 23S rRNAs.

Functionally, this is one of the proteins that bind and probably mediate the attachment of the 5S RNA into the large ribosomal subunit, where it forms part of the central protuberance. The chain is Large ribosomal subunit protein uL18 (rpl18) from Haloferax volcanii (strain ATCC 29605 / DSM 3757 / JCM 8879 / NBRC 14742 / NCIMB 2012 / VKM B-1768 / DS2) (Halobacterium volcanii).